The following is a 264-amino-acid chain: Thymidylate synthase (264 aa).

Arg21 lines the dUMP pocket. His51 is a binding site for (6R)-5,10-methylene-5,6,7,8-tetrahydrofolate. 126-127 (RR) contacts dUMP. Residue Cys146 is the Nucleophile of the active site. Residues 166 to 169 (RSCD), Asn177, and 207 to 209 (HLY) contribute to the dUMP site. Residue Asp169 participates in (6R)-5,10-methylene-5,6,7,8-tetrahydrofolate binding. Ala263 provides a ligand contact to (6R)-5,10-methylene-5,6,7,8-tetrahydrofolate.

Belongs to the thymidylate synthase family. Bacterial-type ThyA subfamily. In terms of assembly, homodimer.

The protein localises to the cytoplasm. It carries out the reaction dUMP + (6R)-5,10-methylene-5,6,7,8-tetrahydrofolate = 7,8-dihydrofolate + dTMP. The protein operates within pyrimidine metabolism; dTTP biosynthesis. Functionally, catalyzes the reductive methylation of 2'-deoxyuridine-5'-monophosphate (dUMP) to 2'-deoxythymidine-5'-monophosphate (dTMP) while utilizing 5,10-methylenetetrahydrofolate (mTHF) as the methyl donor and reductant in the reaction, yielding dihydrofolate (DHF) as a by-product. This enzymatic reaction provides an intracellular de novo source of dTMP, an essential precursor for DNA biosynthesis. The sequence is that of Thymidylate synthase from Photorhabdus laumondii subsp. laumondii (strain DSM 15139 / CIP 105565 / TT01) (Photorhabdus luminescens subsp. laumondii).